The chain runs to 203 residues: Selenocysteine-containing peroxiredoxin PrxU (203 aa).

A Thioredoxin domain is found at 2 to 160; that stretch reads VSVGKKAPDF…TLRQIQAFQL (159 aa). Sec47 is a catalytic residue. A non-standard amino acid (selenocysteine) is located at residue Sec47.

Belongs to the peroxiredoxin family. AhpC/Prx1 subfamily.

The enzyme catalyses a hydroperoxide + [thioredoxin]-dithiol = an alcohol + [thioredoxin]-disulfide + H2O. Its function is as follows. Thiol-specific peroxidase that catalyzes the reduction of hydrogen peroxide and organic hydroperoxides to water and alcohols, respectively. Plays a role in cell protection against oxidative stress by detoxifying peroxides. This is Selenocysteine-containing peroxiredoxin PrxU from Peptoclostridium acidaminophilum (Eubacterium acidaminophilum).